The primary structure comprises 280 residues: Pantothenate synthetase (280 aa).

26–33 (MGNLHDGH) contacts ATP. Residue H33 is the Proton donor of the active site. Q57 contributes to the (R)-pantoate binding site. Q57 serves as a coordination point for beta-alanine. 147–150 (GKKD) lines the ATP pocket. Q153 is a (R)-pantoate binding site. 184-187 (LSSR) is an ATP binding site.

This sequence belongs to the pantothenate synthetase family. Homodimer.

The protein localises to the cytoplasm. The catalysed reaction is (R)-pantoate + beta-alanine + ATP = (R)-pantothenate + AMP + diphosphate + H(+). The protein operates within cofactor biosynthesis; (R)-pantothenate biosynthesis; (R)-pantothenate from (R)-pantoate and beta-alanine: step 1/1. In terms of biological role, catalyzes the condensation of pantoate with beta-alanine in an ATP-dependent reaction via a pantoyl-adenylate intermediate. In Verminephrobacter eiseniae (strain EF01-2), this protein is Pantothenate synthetase.